Reading from the N-terminus, the 198-residue chain is Superoxide dismutase [Mn], mitochondrial (198 aa).

H26 provides a ligand contact to Mn(2+). A 3'-nitrotyrosine modification is found at Y34. 2 positions are modified to N6-acetyllysine; alternate: K44 and K51. K44 and K51 each carry N6-succinyllysine; alternate. H74 is a Mn(2+) binding site. K90 carries the N6-acetyllysine modification. N6-acetyllysine; alternate occurs at positions 98 and 106. An N6-succinyllysine; alternate mark is found at K98 and K106. Mn(2+)-binding residues include D159 and H163. An N6-acetyllysine modification is found at K178.

Belongs to the iron/manganese superoxide dismutase family. Homotetramer. The cofactor is Mn(2+). Nitrated under oxidative stress. Nitration coupled with oxidation inhibits the catalytic activity. Post-translationally, acetylation at Lys-98 decreases enzymatic activity. Deacetylated by SIRT3 upon exposure to ionizing radiations or after long fasting. In terms of processing, polyubiquitinated; leading to proteasomal degradation. Deubiquitinated by USP36 which increases protein stability.

Its subcellular location is the mitochondrion matrix. The enzyme catalyses 2 superoxide + 2 H(+) = H2O2 + O2. Destroys superoxide anion radicals which are normally produced within the cells and which are toxic to biological systems. This is Superoxide dismutase [Mn], mitochondrial (SOD2) from Pan troglodytes (Chimpanzee).